Consider the following 144-residue polypeptide: 3-dehydroquinate dehydratase (144 aa).

The active-site Proton acceptor is the Tyr22. Substrate-binding residues include Asn74, His80, and Asp87. The Proton donor role is filled by His100. Substrate-binding positions include 101 to 102 (LS) and Arg111.

The protein belongs to the type-II 3-dehydroquinase family. Homododecamer.

The enzyme catalyses 3-dehydroquinate = 3-dehydroshikimate + H2O. It participates in metabolic intermediate biosynthesis; chorismate biosynthesis; chorismate from D-erythrose 4-phosphate and phosphoenolpyruvate: step 3/7. Functionally, catalyzes a trans-dehydration via an enolate intermediate. The sequence is that of 3-dehydroquinate dehydratase from Clostridium perfringens (strain ATCC 13124 / DSM 756 / JCM 1290 / NCIMB 6125 / NCTC 8237 / Type A).